Consider the following 695-residue polypeptide: MSTLDRSIQARARAHLFGLLRAGFRVIPLSDATRDRWRSWFLDRHADWVPEPVRGRANHAISRRPTARSDEAAIGHVAYRTIALPETLPATLVAFYLPQFHPIPENDAWWGKGFTEWRNVSRTLPQFEGHQQPRLPADLGFYDLRTPDVMREQARLAQEYGLGAFCFYFYWFAGKTLLEMPITQWHADTSITLPFCLCWANEKWARRWDGRGHDVLIDQAHSADDDLAFIAHVARYMRNPKYLRVGDRPLLLVYRPHLLPEPVQTAARWRNWCRDNGIGEIHLAYVQGFERPDPRDIGFDAAVEFPPNMSTPPSVTARQRLVNPDFSGDVLDWRELARDMEQRPLRDYTLYPGVNPGWDNEPRRSGKGRIYLHASPRRYRDWLARTVQHRLANAPSAHRMVFINAWNEWAEGAVLEPDARLGYAWLDATRQALTRAPDVATEICSPSACVVLHAWYLDVLDEMLDAIVECGTPLRIIITTDLTKVIEVTKCIQRRGIQAEVEGFENRGRDILPFLHVANRLLDENVQLVLKLHTKKSTHRDDGNAWRGEMLTALLGPQRVDAIVNAFSTDPLAGLAAPEDHLLPVTEFIGGNADALDYLTVRTGSDAPDTNSLFASGSMFWARLEALRPLLDAHLHASEFESEQGQIDGTLAHAIERFVGLAVTHSGHRVTTVEQTLGITKTPSAQPYRYARKAP.

This is an uncharacterized protein from Xanthomonas campestris pv. campestris (strain ATCC 33913 / DSM 3586 / NCPPB 528 / LMG 568 / P 25).